Here is a 267-residue protein sequence, read N- to C-terminus: Undecaprenyl-diphosphatase (267 aa).

7 consecutive transmembrane segments (helical) span residues 1-21 (MPLL…FLPV), 40-60 (GQAI…LFFW), 85-105 (LALG…FLYF), 112-132 (LRSV…LYIA), 188-208 (IAML…GTEV), 219-239 (DMGI…ALMM), and 245-265 (VSFT…LFIA).

Belongs to the UppP family.

Its subcellular location is the cell inner membrane. It carries out the reaction di-trans,octa-cis-undecaprenyl diphosphate + H2O = di-trans,octa-cis-undecaprenyl phosphate + phosphate + H(+). Its function is as follows. Catalyzes the dephosphorylation of undecaprenyl diphosphate (UPP). Confers resistance to bacitracin. This is Undecaprenyl-diphosphatase from Ruegeria sp. (strain TM1040) (Silicibacter sp.).